A 224-amino-acid polypeptide reads, in one-letter code: MLIEIPNVFSKEEVNQLREQLDARTWIDGNQTSGVMASTRKRNQQLDKDDPVALQIGELIMARLLAHPLFVSAALPLQFYPPLFNRYQGGETFGYHIDNAIRSTSEGMVRTDLSATLFLSEPDTYQGGELVIQDTYGQQSIKLAAGSLVLYPSTSLHQVTPVTSGERTAAFMWLQSMVRDEGQRRLLFQLDQSIQSLTAQAAPEQELFNLTGVYHNLLRRWSEL.

One can recognise a Fe2OG dioxygenase domain in the interval 78 to 176 (QFYPPLFNRY…RTAAFMWLQS (99 aa)). His96, Asp98, and His157 together coordinate Fe cation. Arg167 lines the 2-oxoglutarate pocket.

Fe(2+) is required as a cofactor. It depends on L-ascorbate as a cofactor.

In Shewanella sp. (strain ANA-3), this protein is PKHD-type hydroxylase Shewana3_0717.